Consider the following 277-residue polypeptide: Orotidine 5'-phosphate decarboxylase (277 aa).

Substrate is bound by residues D40, 62-64 (KTH), 93-102 (DRKFIDIGNT), Y229, and R247. K95 (proton donor) is an active-site residue.

This sequence belongs to the OMP decarboxylase family.

The enzyme catalyses orotidine 5'-phosphate + H(+) = UMP + CO2. It functions in the pathway pyrimidine metabolism; UMP biosynthesis via de novo pathway; UMP from orotate: step 2/2. In Aspergillus oryzae (strain ATCC 42149 / RIB 40) (Yellow koji mold), this protein is Orotidine 5'-phosphate decarboxylase (pyrG).